The chain runs to 787 residues: Protein translocase subunit SecA (787 aa).

ATP contacts are provided by residues Gln85, 103–107, and Asp492; that span reads GEGKT.

The protein belongs to the SecA family. Monomer and homodimer. Part of the essential Sec protein translocation apparatus which comprises SecA, SecYEG and auxiliary proteins SecDF. Other proteins may also be involved.

The protein resides in the cell membrane. The protein localises to the cytoplasm. The enzyme catalyses ATP + H2O + cellular proteinSide 1 = ADP + phosphate + cellular proteinSide 2.. Functionally, part of the Sec protein translocase complex. Interacts with the SecYEG preprotein conducting channel. Has a central role in coupling the hydrolysis of ATP to the transfer of proteins into and across the cell membrane, serving as an ATP-driven molecular motor driving the stepwise translocation of polypeptide chains across the membrane. The sequence is that of Protein translocase subunit SecA from Latilactobacillus sakei subsp. sakei (strain 23K) (Lactobacillus sakei subsp. sakei).